A 212-amino-acid chain; its full sequence is Maleylpyruvate isomerase (212 aa).

The region spanning 1-80 (MKLYNFWRSG…WLEEQYPTPA (80 aa)) is the GST N-terminal domain. Glutathione-binding positions include 9–11 (SGT), His-38, Val-52, 64–65 (QS), 102–104 (DIH), 108–110 (NRR), and Arg-176. Residues 85-212 (DADGRQRVRA…AAPAAQPDSA (128 aa)) enclose the GST C-terminal domain.

It belongs to the GST superfamily. Zeta family. In terms of assembly, homodimer. Requires glutathione as cofactor.

It carries out the reaction 3-maleylpyruvate = 3-fumarylpyruvate. Its pathway is aromatic compound metabolism; naphthalene degradation. Its function is as follows. Catalyzes the GSH-dependent isomerization of maleylpyruvate to fumarylpyruvate which is subsequently processed by NagK to form pyruvate and fumarate. The chain is Maleylpyruvate isomerase from Ralstonia sp.